A 1479-amino-acid polypeptide reads, in one-letter code: Chromosome partition protein MukB (1479 aa).

Residue 34–41 coordinates ATP; sequence GGNGAGKS. 5 coiled-coil regions span residues 337–418, 511–603, 780–810, 847–1116, and 1206–1265; these read LNLV…QYQQ, QAER…RAPV, RAAR…DVQK, ELDR…AKAG, and DDPV…LQAV. Residues 666 to 783 form a flexible hinge region; that stretch reads PGGSEDPRLN…EVPLFGRAAR (118 aa).

This sequence belongs to the SMC family. MukB subfamily. Homodimerization via its hinge domain. Binds to DNA via its C-terminal region. Interacts, and probably forms a ternary complex, with MukE and MukF via its C-terminal region. The complex formation is stimulated by calcium or magnesium. Interacts with tubulin-related protein FtsZ.

The protein localises to the cytoplasm. It is found in the nucleoid. In terms of biological role, plays a central role in chromosome condensation, segregation and cell cycle progression. Functions as a homodimer, which is essential for chromosome partition. Involved in negative DNA supercoiling in vivo, and by this means organize and compact chromosomes. May achieve or facilitate chromosome segregation by condensation DNA from both sides of a centrally located replisome during cell division. This Pectobacterium carotovorum subsp. carotovorum (strain PC1) protein is Chromosome partition protein MukB.